The following is a 632-amino-acid chain: Cell pattern formation-associated protein stuA (632 aa).

Polar residues predominate over residues 1–20 (MNQTQSYMDVHTSHFSSPQP). The segment at 1–27 (MNQTQSYMDVHTSHFSSPQPYGSHGAT) is disordered. The region spanning 128-234 (RVTATLWEDE…HNIGGLLYHP (107 aa)) is the HTH APSES-type domain. The H-T-H motif DNA-binding region spans 162 to 183 (GTKLLNVAGMTRGRRDGILKSE). Disordered regions lie at residues 246 to 315 (DSQQ…ASSL), 340 to 386 (QNVP…KSYY), 403 to 460 (AHSL…QQEP), and 473 to 632 (NRNS…MRRR). 4 stretches are compositionally biased toward polar residues: residues 254–264 (GSQTARTSQGP), 275–295 (MNGS…QTNG), 340–354 (QNVP…TRSM), and 364–376 (GNNL…YQNQ). A compositionally biased stretch (low complexity) spans 377 to 386 (PAYDSSKSYY). Positions 428–438 (EQEHDEVKVDR) are enriched in basic and acidic residues. A compositionally biased stretch (polar residues) spans 473–506 (NRNSYTYTTNPSVSSLSGDHSQLGGSPSHQNGSD). Residues 558 to 576 (AYASNYSGYSSVNGSSMGS) are compositionally biased toward low complexity. The tract at residues 578-604 (KRMRDDDDDHLSRSDGRENEYETKRRK) is nuclear localization domain. Residues 579 to 600 (RMRDDDDDHLSRSDGRENEYET) are compositionally biased toward basic and acidic residues.

This sequence belongs to the EFG1/PHD1/stuA family.

Its subcellular location is the nucleus. Functionally, transcription factor that regulates asexual reproduction. Binds the StuA-response elements (StRE) with the consensus sequence 5'-(A/T)CGCG(T/A)N(A/C)-3' at the promoters of target genes. Required for accurate spatial organization of the developing conidiophore. Primarily involved in the formation of the uninucleate sterigmata, which arise by budding in this multicellular structure. Required for metula and phialide formation during conidiation but is not required for dimorphic growth. The protein is Cell pattern formation-associated protein stuA of Talaromyces marneffei (Penicillium marneffei).